Consider the following 524-residue polypeptide: Probable aminopeptidase NPEPL1 (524 aa).

Zn(2+) is bound by residues K260 and D265. Residue K272 is part of the active site. Positions 283, 342, and 344 each coordinate Zn(2+). R346 is a catalytic residue.

It belongs to the peptidase M17 family. Requires Zn(2+) as cofactor. The cofactor is Mn(2+).

Functionally, probably catalyzes the removal of unsubstituted N-terminal amino acids from various peptides. The protein is Probable aminopeptidase NPEPL1 (Npepl1) of Mus musculus (Mouse).